Consider the following 422-residue polypeptide: 5'-deoxyadenosine deaminase (422 aa).

Residues H57 and H59 each contribute to the Zn(2+) site. The substrate site is built by E86 and H178. A Zn(2+)-binding site is contributed by H205. The substrate site is built by E208 and D294. D294 is a binding site for Zn(2+).

It belongs to the metallo-dependent hydrolases superfamily. MTA/SAH deaminase family. Homotetramer. Zn(2+) serves as cofactor.

The enzyme catalyses 5'-deoxyadenosine + H2O + H(+) = 5'-deoxyinosine + NH4(+). It carries out the reaction S-adenosyl-L-homocysteine + H2O + H(+) = S-inosyl-L-homocysteine + NH4(+). It catalyses the reaction S-methyl-5'-thioadenosine + H2O + H(+) = S-methyl-5'-thioinosine + NH4(+). The catalysed reaction is adenosine + H2O + H(+) = inosine + NH4(+). It participates in amino-acid biosynthesis; S-adenosyl-L-methionine biosynthesis. Functionally, catalyzes the deamination of three SAM-derived enzymatic products, namely 5'-deoxyadenosine, S-adenosyl-L-homocysteine, and 5'-methylthioadenosine, to produce the inosine analogs. Can also deaminate adenosine. The preferred substrate for this enzyme is 5'-deoxyadenosine, but all these substrates are efficiently deaminated. Likely functions in a S-adenosyl-L-methionine (SAM) recycling pathway from S-adenosyl-L-homocysteine (SAH) produced from SAM-dependent methylation reactions. May also be involved in the recycling of 5'-deoxyadenosine, whereupon the 5'-deoxyribose moiety of 5'-deoxyinosine is further metabolized to deoxyhexoses used for the biosynthesis of aromatic amino acids in methanogens. This chain is 5'-deoxyadenosine deaminase, found in Methanococcus maripaludis (strain C6 / ATCC BAA-1332).